The following is a 466-amino-acid chain: Dynein axonemal assembly factor 11 (466 aa).

LRR repeat units lie at residues 22 to 43 (SLEE…DKWC), 45 to 66 (DLKI…SKLK), 67 to 88 (KLEY…EGCE), and 89 to 110 (ELAK…KNLQ). One can recognise an LRRCT domain in the interval 123-161 (NPCASFDHYREFVVATLPQLKWLDGKEIEPSERIKALQD). Residues 178-204 (LKRAKLKEEAQRKHQEEDKNEDKRSNA) adopt a coiled-coil conformation. Residues 185–202 (EEAQRKHQEEDKNEDKRS) show a composition bias toward basic and acidic residues. Disordered stretches follow at residues 185–206 (EEAQ…NAGF), 268–288 (MEKQ…VKPP), and 391–466 (AFKS…PPLI). A compositionally biased stretch (basic residues) spans 269-287 (EKQRKKQEKLSEKKKKVKP). In terms of domain architecture, CS spans 301 to 396 (VNEPKIDFSL…GGQRAFKSMK (96 aa)). Basic and acidic residues-rich tracts occupy residues 398-425 (TSDR…KHSF) and 433-445 (QEKK…RPEP). The span at 450-460 (SEEDPTFEDNP) shows a compositional bias: acidic residues.

This sequence belongs to the tilB family. As to quaternary structure, interacts (via CS domain) with ZMYND10 (via C-terminus). As to expression, expressed predominantly in testis and in nasal epithelial cells.

The protein localises to the cytoplasm. The protein resides in the cell projection. It is found in the cilium. Its subcellular location is the dynein axonemal particle. It localises to the flagellum. In terms of biological role, involved in dynein arm assembly, is important for expression and transporting outer dynein arm (ODA) proteins from the cytoplasm to the cilia. Acts as a crucial component in the formation and motility of spermatozoal flagella. This is Dynein axonemal assembly factor 11 from Homo sapiens (Human).